Here is a 356-residue protein sequence, read N- to C-terminus: DNA polymerase IV (356 aa).

Residues 6-187 form the UmuC domain; it reads IIHIDMDYFF…LDIGDFPGVG (182 aa). Mg(2+) is bound by residues Asp10 and Asp105. Residue Glu106 is part of the active site.

Belongs to the DNA polymerase type-Y family. In terms of assembly, monomer. Mg(2+) serves as cofactor.

It localises to the cytoplasm. It carries out the reaction DNA(n) + a 2'-deoxyribonucleoside 5'-triphosphate = DNA(n+1) + diphosphate. Its function is as follows. Poorly processive, error-prone DNA polymerase involved in untargeted mutagenesis. Copies undamaged DNA at stalled replication forks, which arise in vivo from mismatched or misaligned primer ends. These misaligned primers can be extended by PolIV. Exhibits no 3'-5' exonuclease (proofreading) activity. May be involved in translesional synthesis, in conjunction with the beta clamp from PolIII. This chain is DNA polymerase IV, found in Staphylococcus aureus (strain Mu50 / ATCC 700699).